The following is a 201-amino-acid chain: Receptor expression-enhancing protein 6 (201 aa).

A run of 3 helical transmembrane segments spans residues 36-56 (LAAG…GASL), 89-109 (WVVY…LFWF), and 117-137 (CAFL…LLYH).

This sequence belongs to the DP1 family. Interacts with STX3. Interacts with clathrin. In terms of tissue distribution, expressed in the inner segment of rod photoreceptors and outer plexiform layer of the retina (at protein level). Expressed in liver, but not detected in brain, muscle, kidney, retinal cone photoreceptors or retinal ganglion cells (at protein level). Highly expressed in the ganglion cell layer of the retina and in liver, and also detected at low levels in kidney and testis. Isoform 1: Expressed in the retina. Isoform 2: Expressed in liver.

It localises to the endoplasmic reticulum membrane. The protein localises to the cytoplasmic vesicle. It is found in the clathrin-coated vesicle membrane. Required for correct function and survival of retinal photoreceptors. Required for retinal development. In rod photoreceptors, facilitates stability and/or trafficking of guanylate cyclases and is required to maintain endoplasmic reticulum and mitochondrial homeostasis. May play a role in clathrin-coated intracellular vesicle trafficking of proteins from the endoplasmic reticulum to the retinal rod plasma membrane. The chain is Receptor expression-enhancing protein 6 (Reep6) from Mus musculus (Mouse).